Consider the following 881-residue polypeptide: Putative leucine-rich repeat receptor-like protein kinase At2g19210 (881 aa).

The signal sequence occupies residues 1–25; it reads MVHYNFLSLIIFACFFAVFVLLVRA. Residues 26 to 518 lie on the Extracellular side of the membrane; that stretch reads QDQSGFVSID…SDEKTKKNVY (493 aa). 9 N-linked (GlcNAc...) asparagine glycosylation sites follow: Asn-143, Asn-234, Asn-295, Asn-310, Asn-404, Asn-419, Asn-435, Asn-446, and Asn-462. 2 LRR repeats span residues 438–460 and 462–483; these read LLHI…LGNL and NLTE…KLLE. A helical transmembrane segment spans residues 519-539; that stretch reads IIPLVASVVGVLGLVLAIALF. The Cytoplasmic segment spans residues 540–881; that stretch reads LLYKKRHRRG…FDSGMFPQAR (342 aa). In terms of domain architecture, Protein kinase spans 576–850; it reads NNFERVLGQG…HVVAELKESV (275 aa). Residues 582–590 and Lys-603 each bind ATP; that span reads LGQGGFGKV. Tyr-648 bears the Phosphotyrosine mark. Asp-699 (proton acceptor) is an active-site residue. Phosphothreonine is present on residues Thr-734 and Thr-739. Tyr-747 is modified (phosphotyrosine). The interval 851-881 is disordered; it reads SRARAGGGSGASSVTDPAMTNFDSGMFPQAR.

The protein belongs to the protein kinase superfamily. Ser/Thr protein kinase family.

The protein resides in the cell membrane. The catalysed reaction is L-seryl-[protein] + ATP = O-phospho-L-seryl-[protein] + ADP + H(+). The enzyme catalyses L-threonyl-[protein] + ATP = O-phospho-L-threonyl-[protein] + ADP + H(+). The protein is Putative leucine-rich repeat receptor-like protein kinase At2g19210 of Arabidopsis thaliana (Mouse-ear cress).